Reading from the N-terminus, the 217-residue chain is Cytidylate kinase (217 aa).

ATP is bound at residue 9-17 (GPAASGKSS).

This sequence belongs to the cytidylate kinase family. Type 1 subfamily.

The protein resides in the cytoplasm. It carries out the reaction CMP + ATP = CDP + ADP. The enzyme catalyses dCMP + ATP = dCDP + ADP. The sequence is that of Cytidylate kinase from Bdellovibrio bacteriovorus (strain ATCC 15356 / DSM 50701 / NCIMB 9529 / HD100).